The following is a 1711-amino-acid chain: Serine/threonine-protein kinase MRCK beta (1711 aa).

The Protein kinase domain occupies 76–342 (FEIIKVIGRG…IEDFKKHAFF (267 aa)). Residues 82–90 (IGRGAFGEV) and K105 each bind ATP. The active-site Proton acceptor is the D200. A phosphoserine; by autocatalysis mark is found at S221 and S233. The residue at position 239 (T239) is a Phosphothreonine; by autocatalysis. The 71-residue stretch at 343-413 (EGLNWENIRN…TTESCFSDRG (71 aa)) folds into the AGC-kinase C-terminal domain. Phosphothreonine is present on T423. 2 coiled-coil regions span residues 431–815 (QRDL…AHWE) and 878–939 (ELQS…FRAD). A disordered region spans residues 461 to 484 (LQESTQTVQSLHGSSRALSNSNRD). The span at 463-481 (ESTQTVQSLHGSSRALSNS) shows a compositional bias: polar residues. R671 bears the Omega-N-methylarginine mark. Y954 bears the Phosphotyrosine mark. Residues 969 to 1009 (SSASEQETQAPKPEASPSMSVAASEQQEDMARPPQRPSAVP) are disordered. Residues 1025-1075 (AHQFSIKSFSSPTQCSHCTSLMVGLIRQGYACEVCSFACHVSCKDGAPQVC) form a Phorbol-ester/DAG-type zinc finger. A PH domain is found at 1095-1214 (GTAYKGHVKV…WVGILEGLQS (120 aa)). The region spanning 1240–1513 (IKAILTAAIV…RPLNSEGTLN (274 aa)) is the CNH domain. The region spanning 1583 to 1596 (ISNPTNFNHVAHMG) is the CRIB domain. Residues 1611 to 1711 (AVPPSQEERP…EGLEQPACDT (101 aa)) form a disordered region. Positions 1641–1650 (WPSSGGSEPS) are enriched in polar residues. A compositionally biased stretch (basic and acidic residues) spans 1664–1675 (DFDKEPDSDSTK). 5 positions are modified to phosphoserine: S1680, S1682, S1686, S1690, and S1693.

It belongs to the protein kinase superfamily. AGC Ser/Thr protein kinase family. DMPK subfamily. As to quaternary structure, homodimer and homotetramer via the coiled coil regions. Interacts tightly with GTP-bound but not GDP-bound CDC42. Interacts with TJP1, when in the presence of catalytically active CDC42. Forms a tripartite complex with MYO18A and LURAP1 with the latter acting as an adapter connecting CDC42BPB and MYO18A. LURAP1 binding results in activation of CDC42BPB by abolition of its negative autoregulation. Interacts with STRIP1, STRN3 and SIKE1. Interacts with CPNE4 (via VWFA domain). Interacts with LURAP1. Interacts (via AGC-kinase C-terminal domain) with FAM89B/LRAP25 (via LRR repeat). Forms a tripartite complex with FAM89B/LRAP25 and LIMK1. The cofactor is Mg(2+). Proteolytically cleaved by caspases upon apoptosis induction. Expressed in all tissues examined, with high levels in heart, brain, placenta and lung.

The protein localises to the cytoplasm. Its subcellular location is the cell membrane. It localises to the cell junction. The protein resides in the cell projection. It is found in the lamellipodium. The catalysed reaction is L-seryl-[protein] + ATP = O-phospho-L-seryl-[protein] + ADP + H(+). It carries out the reaction L-threonyl-[protein] + ATP = O-phospho-L-threonyl-[protein] + ADP + H(+). With respect to regulation, maintained in an inactive, closed conformation by an interaction between the kinase domain and the negative autoregulatory C-terminal coiled-coil region. Agonist binding to the phorbol ester binding site disrupts this, releasing the kinase domain to allow N-terminus-mediated dimerization and kinase activation by transautophosphorylation. Inhibited by chelerythrine chloride. Its function is as follows. Serine/threonine-protein kinase which is an important downstream effector of CDC42 and plays a role in the regulation of cytoskeleton reorganization and cell migration. Regulates actin cytoskeletal reorganization via phosphorylation of PPP1R12C and MYL9/MLC2. In concert with MYO18A and LURAP1, is involved in modulating lamellar actomyosin retrograde flow that is crucial to cell protrusion and migration. Phosphorylates PPP1R12A. In concert with FAM89B/LRAP25 mediates the targeting of LIMK1 to the lamellipodium resulting in its activation and subsequent phosphorylation of CFL1 which is important for lamellipodial F-actin regulation. The protein is Serine/threonine-protein kinase MRCK beta of Homo sapiens (Human).